The sequence spans 237 residues: MVKKTSGRGQRDLKVKVKTARGRKLSSTRWLERQLNDPYVAAARRDGYRGRAAYKIIDLDDKYRFLVPGARVVDLGCAPGGWCQVAVKRVNALGEKSGKAVGRIIGLDLQEMEPIAGCELHQLDFMEDDADLKVKDWLGGRADVVMSDMAASASGHKQTDHMRIMALCEAAAELAFDVLEPGGTFVAKVLAGGAEGTLQRLLKQRFKKVANVKPGASRADSSEKFVVATGFRGRDEA.

Positions 80, 82, 108, 124, and 148 each coordinate S-adenosyl-L-methionine. Lysine 188 functions as the Proton acceptor in the catalytic mechanism.

This sequence belongs to the class I-like SAM-binding methyltransferase superfamily. RNA methyltransferase RlmE family.

The protein localises to the cytoplasm. It catalyses the reaction uridine(2552) in 23S rRNA + S-adenosyl-L-methionine = 2'-O-methyluridine(2552) in 23S rRNA + S-adenosyl-L-homocysteine + H(+). Functionally, specifically methylates the uridine in position 2552 of 23S rRNA at the 2'-O position of the ribose in the fully assembled 50S ribosomal subunit. This Jannaschia sp. (strain CCS1) protein is Ribosomal RNA large subunit methyltransferase E.